The chain runs to 761 residues: MESGGGSLGLHTSDARMAHTMIMQDFVAGMAGTAHIDGDHIVVSVPEAVLVSDVVTDDGITLDHGLAAEVVHGPDIITETDVVTEGVIVPEAVLEADVAIEEDLEEDDGDHILTSELITETVRVPEQVFVADLVSGPDGHLEHVVQDCVSGVDSPTMVSEEVLVTNSDTETVIQAGGGVPGSTVTIKTEEDDDDDVKSTSEDYLMISLDDVGEKLEHMGNTPLKIASDGSQEDVKEDAFGSEVIKVYIFKAEAEDDVEIGGTEIVTESEYSSGHSVAGVLDQSRMQREKMVYMAVKDSSQEQDDIRDERRVSRRYEECQAPGNTFDSALENRNTTAAQYLQICDSMNTNKVLKQKIKKRRRGETRQWQTAVIIGPDGQPLTVYPCHICTKKFKSRGFLKRHMKNHPDHLMRKKYQCTDCDFTTNKKVSFHNHLESHKLINKVDKTHEFTEYTRRYREASPLSSNKLILRDKEPKMHKCKYCDYETAEQGLLNRHLLAVHSKSFPHVCVECGKGFRHPSELKKHMRTHTGEKPYQCQYCAFRCADQSNLKTHIKSKHGSNLPYKCEHCPQAFGDERELQRHLDLFQGHKTHQCPHCDHKSTNSSDLKRHIISVHTKDFPHKCEVCDKGFHRPSELKKHSDIHKGRKIHQCRHCDFKTSDPFILSGHILSVHTKDQSLKCKRCKRGFRQQNELKKHMKTHTGRKIYQCEYCEYSTTDASGFKRHVISIHTKDYPHRCEFCKKGFRRPSEKKQHIMRHHKETLM.

Residues Lys224, Lys235, and Lys296 each participate in a glycyl lysine isopeptide (Lys-Gly) (interchain with G-Cter in SUMO2) cross-link. C2H2-type zinc fingers lie at residues 383-408 (YPCHICTKKFKSRGFLKRHMKNHPDH), 414-436 (YQCTDCDFTTNKKVSFHNHLESH), 476-499 (HKCKYCDYETAEQGLLNRHLLAVH), 505-527 (HVCVECGKGFRHPSELKKHMRTH), and 533-556 (YQCQYCAFRCADQSNLKTHIKSKH). The segment at 562–584 (YKCEHCPQAFGDERELQRHLDLF) adopts a C2H2-type 6; atypical zinc-finger fold. The Zn(2+) site is built by Cys564, Cys567, and His580. 6 C2H2-type zinc fingers span residues 590–613 (HQCPHCDHKSTNSSDLKRHIISVH), 619–641 (HKCEVCDKGFHRPSELKKHSDIH), 647–670 (HQCRHCDFKTSDPFILSGHILSVH), 676–698 (LKCKRCKRGFRQQNELKKHMKTH), 704–727 (YQCEYCEYSTTDASGFKRHVISIH), and 733–755 (HRCEFCKKGFRRPSEKKQHIMRH).

Belongs to the krueppel C2H2-type zinc-finger protein family. Interacts with PHF8.

The protein localises to the nucleus. Functionally, transcription regulator required for brain development. Probably acts as a transcription factor that binds to the promoter of target genes and recruits PHF8 histone demethylase, leading to activated expression of genes involved in neuron development, such as KDM5C. May compete with transcription factor ARX for activation of expression of KDM5C. This Mus musculus (Mouse) protein is Zinc finger protein 711 (Znf711).